Reading from the N-terminus, the 589-residue chain is Aspartate--tRNA ligase (589 aa).

E174 lines the L-aspartate pocket. The segment at Q198–K201 is aspartate. R220 serves as a coordination point for L-aspartate. ATP contacts are provided by residues R220–E222 and Q229. H448 provides a ligand contact to L-aspartate. ATP is bound at residue E483. R490 lines the L-aspartate pocket. Residue G535–R538 participates in ATP binding.

This sequence belongs to the class-II aminoacyl-tRNA synthetase family. Type 1 subfamily. Homodimer.

It localises to the cytoplasm. It catalyses the reaction tRNA(Asp) + L-aspartate + ATP = L-aspartyl-tRNA(Asp) + AMP + diphosphate. Functionally, catalyzes the attachment of L-aspartate to tRNA(Asp) in a two-step reaction: L-aspartate is first activated by ATP to form Asp-AMP and then transferred to the acceptor end of tRNA(Asp). The chain is Aspartate--tRNA ligase from Xylella fastidiosa (strain 9a5c).